The chain runs to 676 residues: Serine/threonine-protein kinase Haspin homolog ALK2 (676 aa).

Residues 53-93 (HKGSAEDESQSFFTSSDSPTSKTRPVGKTIENDDYYGKRSS) are disordered. Over residues 62–75 (QSFFTSSDSPTSKT) the composition is skewed to polar residues. Residues 116-118 (KEN) carry the KEN box motif. A D box motif is present at residues 150–158 (RTPLRPISN). A disordered region spans residues 228 to 312 (SSRSVNDQDP…HKTSHSSLNK (85 aa)). Residues 232-259 (VNDQDPNFVQPKPTNSLQKKSSISSFHN) are compositionally biased toward polar residues. A Protein kinase domain is found at 383–672 (LCDVKYILHD…TCGDLLSLKG (290 aa)). Residues 389–397 (ILHDLREAQ) and lysine 430 contribute to the ATP site.

Belongs to the protein kinase superfamily. Ser/Thr protein kinase family. Haspin subfamily. Periodically phosphorylated during the cell cycle with a phosphorylation peak during mitosis and hyperphosphorylated after DNA damage.

It catalyses the reaction L-seryl-[protein] + ATP = O-phospho-L-seryl-[protein] + ADP + H(+). The catalysed reaction is L-threonyl-[protein] + ATP = O-phospho-L-threonyl-[protein] + ADP + H(+). Its function is as follows. Serine/threonine haspin-like protein kinase involved in cell cycle regulation. This chain is Serine/threonine-protein kinase Haspin homolog ALK2 (ALK2), found in Saccharomyces cerevisiae (strain ATCC 204508 / S288c) (Baker's yeast).